Reading from the N-terminus, the 138-residue chain is ATP synthase epsilon chain (138 aa).

It belongs to the ATPase epsilon chain family. As to quaternary structure, F-type ATPases have 2 components, CF(1) - the catalytic core - and CF(0) - the membrane proton channel. CF(1) has five subunits: alpha(3), beta(3), gamma(1), delta(1), epsilon(1). CF(0) has three main subunits: a, b and c.

The protein resides in the cell inner membrane. Its function is as follows. Produces ATP from ADP in the presence of a proton gradient across the membrane. In Idiomarina loihiensis (strain ATCC BAA-735 / DSM 15497 / L2-TR), this protein is ATP synthase epsilon chain.